The primary structure comprises 214 residues: Transmembrane emp24 domain-containing protein p24beta3 (214 aa).

An N-terminal signal peptide occupies residues 1 to 27; the sequence is MERRQAKIHVFVLIGLILLNSINQISS. Residues 28-178 lie on the Lumenal side of the membrane; the sequence is LSVTVNDEEC…RHTNESTRKR (151 aa). One can recognise a GOLD domain in the interval 35 to 122; it reads EECVQEYVLY…PETVSFYIHV (88 aa). Positions 140–158 form a coiled coil; it reads VNVKIAELREALESVVAEQ. Residues Arg164 and Arg169 each carry the omega-N-methylated arginine modification. Asn172 carries an N-linked (GlcNAc...) asparagine glycan. The chain crosses the membrane as a helical span at residues 179-199; it reads VIFYTVGEYIFLAAASGLQVL. Residues 200-214 lie on the Cytoplasmic side of the membrane; that stretch reads YIRKLFSKSVAYNRV. The COPII vesicle coat-binding motif lies at 204–205; that stretch reads LF. The COPI vesicle coat-binding signature appears at 204–214; that stretch reads LFSKSVAYNRV. A Required for the export from the endoplasmic reticulum to the Golgi motif is present at residues 213–214; that stretch reads RV.

It belongs to the EMP24/GP25L family. Probably oligomerizes with other members of the EMP24/GP25L family. Associates with the COPI vesicle coat (coatomer). Associates with the COPII vesicle coat (coatomer).

It is found in the golgi apparatus. It localises to the cis-Golgi network membrane. The protein localises to the golgi stack membrane. In terms of biological role, involved in vesicular protein trafficking. Mainly functions in the early secretory pathway but also in post-Golgi membranes. Thought to act as cargo receptor at the lumenal side for incorporation of secretory cargo molecules into transport vesicles and to be involved in vesicle coat formation at the cytoplasmic side. The sequence is that of Transmembrane emp24 domain-containing protein p24beta3 from Arabidopsis thaliana (Mouse-ear cress).